Consider the following 482-residue polypeptide: Membrane-bound lytic murein transglycosylase F (482 aa).

The N-terminal stretch at 1-13 (MKGLFLRIITALA) is a signal peptide. The non-LT domain stretch occupies residues 14-267 (LLFWAIDMVF…NLKEKYLGHI (254 aa)). Residues 268–482 (SQFDYVDTRS…NLEEIKENKD (215 aa)) form an LT domain region. Glu312 is a catalytic residue.

In the N-terminal section; belongs to the bacterial solute-binding protein 3 family. The protein in the C-terminal section; belongs to the transglycosylase Slt family.

Its subcellular location is the cell outer membrane. The enzyme catalyses Exolytic cleavage of the (1-&gt;4)-beta-glycosidic linkage between N-acetylmuramic acid (MurNAc) and N-acetylglucosamine (GlcNAc) residues in peptidoglycan, from either the reducing or the non-reducing ends of the peptidoglycan chains, with concomitant formation of a 1,6-anhydrobond in the MurNAc residue.. Its function is as follows. Murein-degrading enzyme that degrades murein glycan strands and insoluble, high-molecular weight murein sacculi, with the concomitant formation of a 1,6-anhydromuramoyl product. Lytic transglycosylases (LTs) play an integral role in the metabolism of the peptidoglycan (PG) sacculus. Their lytic action creates space within the PG sacculus to allow for its expansion as well as for the insertion of various structures such as secretion systems and flagella. This is Membrane-bound lytic murein transglycosylase F from Haemophilus influenzae (strain PittEE).